A 404-amino-acid polypeptide reads, in one-letter code: Acetate kinase (404 aa).

Position 7 (Asn-7) interacts with Mg(2+). ATP is bound at residue Lys-14. Arg-98 contacts substrate. Residue Asp-155 is the Proton donor/acceptor of the active site. ATP is bound by residues His-214–Gly-218, Asp-289–Arg-291, and Gly-337–Asn-341. Glu-390 is a Mg(2+) binding site.

Belongs to the acetokinase family. As to quaternary structure, homodimer. Requires Mg(2+) as cofactor. Mn(2+) serves as cofactor.

Its subcellular location is the cytoplasm. The enzyme catalyses acetate + ATP = acetyl phosphate + ADP. The protein operates within metabolic intermediate biosynthesis; acetyl-CoA biosynthesis; acetyl-CoA from acetate: step 1/2. In terms of biological role, catalyzes the formation of acetyl phosphate from acetate and ATP. Can also catalyze the reverse reaction. The sequence is that of Acetate kinase from Rippkaea orientalis (strain PCC 8801 / RF-1) (Cyanothece sp. (strain PCC 8801)).